The primary structure comprises 127 residues: Polyadenylate-binding protein-interacting protein 2 (127 aa).

Residues 1 to 15 (MKDPSRSSTSPSIIS) show a composition bias toward low complexity. The segment at 1-24 (MKDPSRSSTSPSIISEDVIINGHS) is disordered. Positions 22 to 75 (GHSHEDDNPFAEYMWMENEEEFNRQIEEELWEEEFIERCFQEMLEEEEEHEWFI) are PABPC1-interacting motif-1 (PAM1). The tract at residues 105–120 (LVVKSNLNPNAKEFVP) is PABPC1-interacting motif-2 (PAM2).

This sequence belongs to the PAIP2 family. In terms of processing, ubiquitinated, leading to its degradation by the proteasome.

The protein resides in the cytoplasm. Its function is as follows. Acts as a repressor in the regulation of translation initiation of poly(A)-containing mRNAs. Its inhibitory activity on translation is mediated via its action on PABPC1. Displaces the interaction of PABPC1 with poly(A) RNA and competes with PAIP1 for binding to PABPC1. Its association with PABPC1 results in disruption of the cytoplasmic poly(A) RNP structure organization. The protein is Polyadenylate-binding protein-interacting protein 2 (PAIP2) of Gallus gallus (Chicken).